The chain runs to 111 residues: Colipase (111 aa).

The first 17 residues, 1–17, serve as a signal peptide directing secretion; the sequence is MEKVLALVLLTLAVAYA. The propeptide at 18 to 22 is enterostatin, activation peptide; that stretch reads APDPR. 5 disulfide bridges follow: cysteine 34–cysteine 45, cysteine 40–cysteine 56, cysteine 44–cysteine 78, cysteine 66–cysteine 86, and cysteine 80–cysteine 104.

Belongs to the colipase family. As to quaternary structure, forms a 1:1 stoichiometric complex with pancreatic lipase. As to expression, expressed by the pancreas.

It is found in the secreted. Its function is as follows. Colipase is a cofactor of pancreatic lipase. It allows the lipase to anchor itself to the lipid-water interface. Without colipase the enzyme is washed off by bile salts, which have an inhibitory effect on the lipase. Functionally, enterostatin has a biological activity as a satiety signal. This Myocastor coypus (Coypu) protein is Colipase (CLPS).